The following is a 306-amino-acid chain: Pyridoxal 5'-phosphate synthase subunit PdxS (306 aa).

D36 provides a ligand contact to D-ribose 5-phosphate. Catalysis depends on K93, which acts as the Schiff-base intermediate with D-ribose 5-phosphate. G165 contributes to the D-ribose 5-phosphate binding site. R177 serves as a coordination point for D-glyceraldehyde 3-phosphate. D-ribose 5-phosphate contacts are provided by residues G226 and G247–S248.

It belongs to the PdxS/SNZ family. In the presence of PdxT, forms a dodecamer of heterodimers.

The catalysed reaction is aldehydo-D-ribose 5-phosphate + D-glyceraldehyde 3-phosphate + L-glutamine = pyridoxal 5'-phosphate + L-glutamate + phosphate + 3 H2O + H(+). It functions in the pathway cofactor biosynthesis; pyridoxal 5'-phosphate biosynthesis. Catalyzes the formation of pyridoxal 5'-phosphate from ribose 5-phosphate (RBP), glyceraldehyde 3-phosphate (G3P) and ammonia. The ammonia is provided by the PdxT subunit. Can also use ribulose 5-phosphate and dihydroxyacetone phosphate as substrates, resulting from enzyme-catalyzed isomerization of RBP and G3P, respectively. The chain is Pyridoxal 5'-phosphate synthase subunit PdxS from Salinispora arenicola (strain CNS-205).